The chain runs to 707 residues: MFFLDNTDSMTSSSRGITMPNTISSHEDVGGYSPRKVGIQHDYSAVGGGGAAFHHLHTSAATPRHVATSEFYDDEEATSPRGGIEIGAGGGKMMANLRRHRQRERETYEDEDVLSSSDESSGRPIPRYVGRDTDHVFGEFEMDDEDVVMRREDGYGEDETDEDYFDEEEPVAELLPLGGGTRRVPRTPGRKNSSKCGFFDYYKLTDEHLGSGAYGSVTTCKSIKSGVEYAVKIVDKQGETHSRKRILREVNIFKTCKDHPNIVQLLDWFEDETNFYLVMEKMRGGPLLQHILQRKYFTEEEARRVTKDISLALKFMHDRGIAHRDVKPENVLCTDPNHVSPVKLCDLDLASQRPPQHERHPLSQVASEPDLASPVGSAEFMAPEVVDAYVGDSLKYDKKCDTWSLGVILYIMLAGYAPFQGMCDDEDCGWSEGKPCEDCQQDLFHRIQDGYYEFPEEEWGMISEEAKDLVSNLLKRDPVDRFNADQILSHRWLQQSAASTILQTPSNLINRKDSARDVQQMSEHFNLMNRLADTRLSARFDNKMTMSECGSDLGTATIHGDGSFLSMGGEPFGTFPRKKSVGIAIEKSRSGEFTPPISRASPTTPPPSMLNLSEDLTDSPVKRRSADDSGTFSLFSPASSNGDDSICSPPMVFVDMPSIQLFGTGALLTSVQMTPRHTTEDDASLKSFEDEQENANPIHRIETQVNV.

Polar residues predominate over residues 1–24; it reads MFFLDNTDSMTSSSRGITMPNTIS. Disordered stretches follow at residues 1–29 and 101–131; these read MFFLDNTDSMTSSSRGITMPNTISSHEDV and RQRERETYEDEDVLSSSDESSGRPIPRYVGR. The region spanning 203-493 is the Protein kinase domain; the sequence is KLTDEHLGSG…ADQILSHRWL (291 aa). ATP is bound by residues 209–217 and K232; that span reads LGSGAYGSV. The Proton acceptor role is filled by D325. Disordered stretches follow at residues 589-628 and 688-707; these read RSGEFTPPISRASPTTPPPSMLNLSEDLTDSPVKRRSADD and FEDEQENANPIHRIETQVNV.

Belongs to the protein kinase superfamily. CAMK Ser/Thr protein kinase family. Mg(2+) serves as cofactor. In terms of tissue distribution, expressed in pharynx, intestine, vulva and body wall muscles.

The protein localises to the nucleus. The protein resides in the cytoplasm. It carries out the reaction L-seryl-[protein] + ATP = O-phospho-L-seryl-[protein] + ADP + H(+). The catalysed reaction is L-threonyl-[protein] + ATP = O-phospho-L-threonyl-[protein] + ADP + H(+). Serine/threonine-protein kinase which is required in the germline to positively regulate lifespan. May play a role in body wall muscle contraction. May be involved in embryonic cytokinesis. This Caenorhabditis elegans protein is MAP kinase-interacting serine/threonine-protein kinase mnk-1.